The following is a 154-amino-acid chain: Prefoldin subunit alpha (154 aa).

It belongs to the prefoldin alpha subunit family. In terms of assembly, heterohexamer of two alpha and four beta subunits.

It is found in the cytoplasm. Its function is as follows. Molecular chaperone capable of stabilizing a range of proteins. Seems to fulfill an ATP-independent, HSP70-like function in archaeal de novo protein folding. This is Prefoldin subunit alpha from Hyperthermus butylicus (strain DSM 5456 / JCM 9403 / PLM1-5).